Reading from the N-terminus, the 236-residue chain is MTRRYWNINLEEMMEAGVHFGHGTRKWNPKMEPYISAKRKGIHITNLTRTARFLSEACDLVFDAGSRGKQFLIVGTKNKAADSVAWAAIRARCHYVNKKWLGGMLTNWSTTETRLHKFRDLRMEQKTGRLNRLPKRDAAMLKRQLSRLQTYLGGIKYMTGLPDIVIIIDQHEEYTALRECITLGIPTICLIDTNCDPDLADISIPANDDAISSIRLILNKLVFAICEGRSSYIRNP.

Belongs to the universal ribosomal protein uS2 family.

The protein resides in the plastid. Its subcellular location is the chloroplast. This chain is Small ribosomal subunit protein uS2c (rps2), found in Coffea arabica (Arabian coffee).